Reading from the N-terminus, the 178-residue chain is CDP-archaeol synthase (178 aa).

5 consecutive transmembrane segments (helical) span residues 3–23 (LLLL…ANAV), 56–76 (FFGI…VILY), 91–111 (IILS…GSFI), 131–151 (FIIF…NIIV), and 152–172 (LLLV…YKLH).

The protein belongs to the CDP-archaeol synthase family. It depends on Mg(2+) as a cofactor.

Its subcellular location is the cell membrane. It catalyses the reaction 2,3-bis-O-(geranylgeranyl)-sn-glycerol 1-phosphate + CTP + H(+) = CDP-2,3-bis-O-(geranylgeranyl)-sn-glycerol + diphosphate. It functions in the pathway membrane lipid metabolism; glycerophospholipid metabolism. Functionally, catalyzes the formation of CDP-2,3-bis-(O-geranylgeranyl)-sn-glycerol (CDP-archaeol) from 2,3-bis-(O-geranylgeranyl)-sn-glycerol 1-phosphate (DGGGP) and CTP. This reaction is the third ether-bond-formation step in the biosynthesis of archaeal membrane lipids. The polypeptide is CDP-archaeol synthase (Methanococcus maripaludis (strain DSM 14266 / JCM 13030 / NBRC 101832 / S2 / LL)).